The sequence spans 196 residues: Cilia- and flagella-associated protein 107 (196 aa).

Mn stretches follow at residues 47-62 and 97-109; these read TPQCIYRKEYVPMPDH and ISTYDDHYNRHNY.

Microtubule inner protein component of sperm flagellar doublet microtubules.

It localises to the cytoplasm. Its subcellular location is the cytoskeleton. The protein resides in the cilium axoneme. The protein localises to the flagellum axoneme. Microtubule inner protein (MIP) part of the dynein-decorated doublet microtubules (DMTs) in cilia axoneme, which is required for motile cilia beating. This is Cilia- and flagella-associated protein 107 from Mus musculus (Mouse).